Consider the following 30-residue polypeptide: Cyclotide cter-P (30 aa).

A cross-link (cyclopeptide (Gly-Asn)) is located at residues 1 to 30 (GIPCGESCVFIPCITAAIGCSCKSKVCYRN). 3 disulfide bridges follow: Cys-4-Cys-20, Cys-8-Cys-22, and Cys-13-Cys-27.

Post-translationally, this is a cyclic peptide.

It localises to the secreted. Probably participates in a plant defense mechanism. The chain is Cyclotide cter-P from Clitoria ternatea (Butterfly pea).